Here is a 1407-residue protein sequence, read N- to C-terminus: DNA-directed RNA polymerase subunit beta' (1407 aa).

Positions 70, 72, 85, and 88 each coordinate Zn(2+). Mg(2+) is bound by residues D458, D460, and D462. 4 residues coordinate Zn(2+): C814, C888, C895, and C898.

Belongs to the RNA polymerase beta' chain family. The RNAP catalytic core consists of 2 alpha, 1 beta, 1 beta' and 1 omega subunit. When a sigma factor is associated with the core the holoenzyme is formed, which can initiate transcription. Mg(2+) is required as a cofactor. It depends on Zn(2+) as a cofactor.

It catalyses the reaction RNA(n) + a ribonucleoside 5'-triphosphate = RNA(n+1) + diphosphate. Functionally, DNA-dependent RNA polymerase catalyzes the transcription of DNA into RNA using the four ribonucleoside triphosphates as substrates. This Leptothrix cholodnii (strain ATCC 51168 / LMG 8142 / SP-6) (Leptothrix discophora (strain SP-6)) protein is DNA-directed RNA polymerase subunit beta'.